The primary structure comprises 580 residues: Protein O-linked-mannose beta-1,4-N-acetylglucosaminyltransferase 2 (580 aa).

Residues 1–4 (MHLS) lie on the Cytoplasmic side of the membrane. Residues 5 to 25 (AVLNALLVSVLAAVLWKHVRL) form a helical; Signal-anchor for type II membrane protein membrane-spanning segment. At 26-580 (REHAAALEEE…PFADVLVCNT (555 aa)) the chain is on the lumenal side. 2 N-linked (GlcNAc...) asparagine glycosylation sites follow: Asn-99 and Asn-276. Positions 488–580 (ARCQASVQGA…PFADVLVCNT (93 aa)) constitute a Fibronectin type-III domain.

The protein belongs to the glycosyltransferase 61 family.

It is found in the endoplasmic reticulum membrane. The enzyme catalyses 3-O-(alpha-D-mannosyl)-L-threonyl-[protein] + UDP-N-acetyl-alpha-D-glucosamine = 3-O-(N-acetyl-beta-D-glucosaminyl-(1-&gt;4)-alpha-D-mannosyl)-L-threonyl-[protein] + UDP + H(+). Its pathway is protein modification; protein glycosylation. O-linked mannose beta-1,4-N-acetylglucosaminyltransferase that transfers UDP-N-acetyl-D-glucosamine to the 4-position of the mannose to generate N-acetyl-D-glucosamine-beta-1,4-O-D-mannosylprotein. Involved in the biosynthesis of the phosphorylated O-mannosyl trisaccharide (N-acetylgalactosamine-beta-3-N-acetylglucosamine-beta-4-(phosphate-6-)mannose), a carbohydrate structure present in alpha-dystroglycan (DAG1), which is required for binding laminin G-like domain-containing extracellular proteins with high affinity. The polypeptide is Protein O-linked-mannose beta-1,4-N-acetylglucosaminyltransferase 2 (POMGNT2) (Canis lupus familiaris (Dog)).